We begin with the raw amino-acid sequence, 257 residues long: MSVPAGSVSCLANALLNLRSSTDYNADHGVKNSILNFSNSKDASRFDGSESWSSSVLDKNQFIVAGSDSVKHFVAISTQGRGDHDQWVTSYKLRYTLDNVNWVEYNNGEIINANKDRNSIVTINFNPPIKARSIAIHPQTYNNHISLRWELYALPVKSYSNPSVQVGEVSIGDRSLNSGTGSRTIVRHVKFPVEFLSVPIVSIGCKKVDAHTDNGQMRWEGKSENITTKGFDLTFITWGNNAVYDLTFDYVAVEFNN.

Residues 1–155 (MSVPAGSVSC…SLRWELYALP (155 aa)) are beta-sandwich. The 145-residue stretch at 10 to 154 (CLANALLNLR…ISLRWELYAL (145 aa)) folds into the F5/8 type C domain. Residues Asn39, Ser40, and Asp47 each coordinate Ca(2+). The short motif at 81-83 (RGD) is the Cell attachment site element. The residue at position 84 (His84) is a Phosphohistidine. Residues 156 to 162 (VKSYSNP) are linker. The lectin-like stretch occupies residues 163–257 (SVQVGEVSIG…FDYVAVEFNN (95 aa)). 3 residues coordinate a carbohydrate: Asp209, Arg218, and Trp238.

In terms of assembly, homotrimer. In terms of processing, the N-terminus is blocked. As to expression, maturing spore cells.

In terms of biological role, galactose-binding lectin. May be necessary for the primary process of spore formation and may be involved in spore coat formation. This is Discoidin-2 (dscE) from Dictyostelium discoideum (Social amoeba).